The following is a 214-amino-acid chain: Ras-related protein RABH1c (214 aa).

16 to 23 (GDQSVGKT) contributes to the GTP binding site. Positions 38–46 (YQPTIGIDF) match the Effector region motif. GTP is bound by residues 64-68 (DTAGQ), 123-126 (NKTD), and 153-154 (SA). A disordered region spans residues 194–214 (TSNSSQGEQQGGAGGGGGCSC). A compositionally biased stretch (gly residues) spans 202 to 214 (QQGGAGGGGGCSC). 2 S-geranylgeranyl cysteine lipidation sites follow: C212 and C214. A Cysteine methyl ester modification is found at C214.

This sequence belongs to the small GTPase superfamily. Rab family. In terms of assembly, interacts with the C-terminus of GC5, but not with GC3.

It localises to the golgi apparatus membrane. The protein resides in the cytoplasm. It is found in the cytosol. In terms of biological role, protein transport. Regulator of membrane traffic from the Golgi apparatus towards the endoplasmic reticulum (ER). This Arabidopsis thaliana (Mouse-ear cress) protein is Ras-related protein RABH1c (RABH1C).